The sequence spans 558 residues: Potassium-transporting ATPase potassium-binding subunit 1 (558 aa).

12 consecutive transmembrane segments (helical) span residues 1–21, 66–86, 127–147, 166–186, 245–265, 281–301, 327–347, 354–374, 377–397, 416–436, 482–502, and 531–551; these read MEIILFLTMMVMITYVFSGYL, FNGFMGFITFVLLIVQQWLFL, MIVMTYLMFTSSASGYAVCIA, IVRFIVRVLLPLSCLISILLM, IWSNFIEMGSMMLLPMSMLFL, ALILFVAMFFIFIAILTLTMW, FGAGLSALFTVITTAFTTGSV, LTPIGGLGPMVLMMLNVVFGG, VGLMNLLIFVLLTVFICSLMV, IVLVFLIHPILILVFSALAFM, ISTGIIMLLSRYIPIILQLMI, and IVFIVLLSGLTFIPVLLLGPI.

It belongs to the KdpA family. As to quaternary structure, the system is composed of three essential subunits: KdpA, KdpB and KdpC.

It localises to the cell membrane. Functionally, part of the high-affinity ATP-driven potassium transport (or Kdp) system, which catalyzes the hydrolysis of ATP coupled with the electrogenic transport of potassium into the cytoplasm. This subunit binds the extracellular potassium ions and delivers the ions to the membrane domain of KdpB through an intramembrane tunnel. The chain is Potassium-transporting ATPase potassium-binding subunit 1 from Staphylococcus aureus (strain Mu50 / ATCC 700699).